Here is a 315-residue protein sequence, read N- to C-terminus: MLTKSRKYFNQTWIESLFKQTTALFALLVFILLAAILISLVIGSWESIKRFGGSFLLETYWDPVQEQYGAIIPILGTLITAGIALFIAVPISFGIAIFLTELAPNWLKRPISIAIEMLAAIPSIIYGMWGLFVFVPLFQEHIQPVLIDNLGNLPGLELFFSGVPFGVGLFTAGLVLAIMIIPFIASVMRDVFSIVPPMLKEGAYGLGATTWEVVRQVIVPHTRIGLVGSVMLGLGRALGETMAITFIIGNSFQLPNSLFSPSTSIASAIANEFNEAGGLQKSALMELGLLLFVITTMVLILSRLMITKMQQTKGK.

Residues 1 to 22 (MLTKSRKYFNQTWIESLFKQTT) are Cytoplasmic-facing. The helical transmembrane segment at 23 to 43 (ALFALLVFILLAAILISLVIG) threads the bilayer. Residues 44–77 (SWESIKRFGGSFLLETYWDPVQEQYGAIIPILGT) lie on the Periplasmic side of the membrane. In terms of domain architecture, ABC transmembrane type-1 spans 74–302 (ILGTLITAGI…VITTMVLILS (229 aa)). A helical transmembrane segment spans residues 78-98 (LITAGIALFIAVPISFGIAIF). Residues 99-117 (LTELAPNWLKRPISIAIEM) are Cytoplasmic-facing. Residues 118 to 138 (LAAIPSIIYGMWGLFVFVPLF) traverse the membrane as a helical segment. Topologically, residues 139–164 (QEHIQPVLIDNLGNLPGLELFFSGVP) are periplasmic. A helical membrane pass occupies residues 165–185 (FGVGLFTAGLVLAIMIIPFIA). Over 186-223 (SVMRDVFSIVPPMLKEGAYGLGATTWEVVRQVIVPHTR) the chain is Cytoplasmic. The chain crosses the membrane as a helical span at residues 224–244 (IGLVGSVMLGLGRALGETMAI). Residues 245–281 (TFIIGNSFQLPNSLFSPSTSIASAIANEFNEAGGLQK) are Periplasmic-facing. The helical transmembrane segment at 282–302 (SALMELGLLLFVITTMVLILS) threads the bilayer. Topologically, residues 303–315 (RLMITKMQQTKGK) are cytoplasmic.

The protein belongs to the binding-protein-dependent transport system permease family. CysTW subfamily.

Its subcellular location is the cell inner membrane. Functionally, part of the binding-protein-dependent transport system for phosphate; probably responsible for the translocation of the substrate across the membrane. The protein is Phosphate transport system permease protein PstC (pstC) of Haemophilus influenzae (strain ATCC 51907 / DSM 11121 / KW20 / Rd).